The sequence spans 357 residues: MTKENICIVFGGKSAEHDVSILTAQNVLNAIDKERYQVDIIYITNDGEWKKKDNITQEIKNTDELVINDVETGEISQLLSKGSLGKSYDAVFPLLHGPNGEDGTIQGLFEVLDIPYVGNGVLAASSSMDKLVMKQLFEHRGLPQLPYISFLRSEYEKYENNIIKLVNDKLTYPVFVKPANLGSSVGISKCNNEEELKSGIAEAFQFDRKLVIEQGINAREIEVAVLGNDYPETTWPGEVVKDVAFYDYKSKYKDGKIRLDIPADLDQDVQMTLRNMALEAFKATDCSGLVRADFFVTDDNQIYINETNAMPGFTAYSMYPNLWKNMGLSYPDLIAKLIDLAKERYEDKKKNKYKIDY.

Positions 134–339 constitute an ATP-grasp domain; the sequence is KQLFEHRGLP…YPDLIAKLID (206 aa). 167 to 222 is an ATP binding site; sequence NDKLTYPVFVKPANLGSSVGISKCNNEEELKSGIAEAFQFDRKLVIEQGINAREIE. Residues aspartate 293, glutamate 306, and asparagine 308 each contribute to the Mg(2+) site.

Belongs to the D-alanine--D-alanine ligase family. Mg(2+) serves as cofactor. Mn(2+) is required as a cofactor.

It is found in the cytoplasm. It carries out the reaction 2 D-alanine + ATP = D-alanyl-D-alanine + ADP + phosphate + H(+). It participates in cell wall biogenesis; peptidoglycan biosynthesis. Cell wall formation. The polypeptide is D-alanine--D-alanine ligase (Staphylococcus epidermidis (strain ATCC 35984 / DSM 28319 / BCRC 17069 / CCUG 31568 / BM 3577 / RP62A)).